Consider the following 101-residue polypeptide: NADH-quinone oxidoreductase subunit K (101 aa).

3 helical membrane passes run leucine 4–leucine 24, isoleucine 30–phenylalanine 50, and phenylalanine 62–valine 82.

The protein belongs to the complex I subunit 4L family. In terms of assembly, NDH-1 is composed of 14 different subunits. Subunits NuoA, H, J, K, L, M, N constitute the membrane sector of the complex.

It localises to the cell inner membrane. The catalysed reaction is a quinone + NADH + 5 H(+)(in) = a quinol + NAD(+) + 4 H(+)(out). Its function is as follows. NDH-1 shuttles electrons from NADH, via FMN and iron-sulfur (Fe-S) centers, to quinones in the respiratory chain. The immediate electron acceptor for the enzyme in this species is believed to be ubiquinone. Couples the redox reaction to proton translocation (for every two electrons transferred, four hydrogen ions are translocated across the cytoplasmic membrane), and thus conserves the redox energy in a proton gradient. The sequence is that of NADH-quinone oxidoreductase subunit K from Xylella fastidiosa (strain Temecula1 / ATCC 700964).